Reading from the N-terminus, the 108-residue chain is Thioredoxin (108 aa).

The Thioredoxin domain occupies 2–108 (GKYFEATDKN…IAKKIDEHIG (107 aa)). A disulfide bridge links Cys32 with Cys35.

This sequence belongs to the thioredoxin family.

Its function is as follows. Participates in various redox reactions through the reversible oxidation of its active center dithiol to a disulfide and catalyzes dithiol-disulfide exchange reactions. The polypeptide is Thioredoxin (trxA) (Chlorobaculum thiosulfatiphilum (Chlorobium limicola f.sp. thiosulfatophilum)).